Consider the following 251-residue polypeptide: Squamosa promoter-binding-like protein 4 (251 aa).

Positions 1 to 15 (MDWMPPPKPTSPRSP) are enriched in pro residues. The tract at residues 1–64 (MDWMPPPKPT…RAEEGGGGGG (64 aa)) is disordered. Residues 24–43 (AAVPGSSSGEVSAAAAAAAA) are compositionally biased toward low complexity. Residues 65-142 (EVRCQVEGCG…YDHNARRRKP (78 aa)) form an SBP-type zinc finger. Zn(2+)-binding residues include cysteine 68, cysteine 73, cysteine 90, histidine 93, cysteine 109, cysteine 112, histidine 116, and cysteine 128. The short motif at 125–141 (KRSCRRRLYDHNARRRK) is the Bipartite nuclear localization signal element.

As to expression, expressed in stems, leaf sheaths, and young panicles.

Its subcellular location is the nucleus. Trans-acting factor that binds specifically to the consensus nucleotide sequence 5'-TNCGTACAA-3'. May be involved in panicle development. This Oryza sativa subsp. japonica (Rice) protein is Squamosa promoter-binding-like protein 4 (SPL4).